Here is a 332-residue protein sequence, read N- to C-terminus: Ribosomal RNA small subunit methyltransferase C (332 aa).

The protein belongs to the methyltransferase superfamily. RsmC family. In terms of assembly, monomer.

The protein localises to the cytoplasm. It carries out the reaction guanosine(1207) in 16S rRNA + S-adenosyl-L-methionine = N(2)-methylguanosine(1207) in 16S rRNA + S-adenosyl-L-homocysteine + H(+). Functionally, specifically methylates the guanine in position 1207 of 16S rRNA in the 30S particle. This Pseudomonas paraeruginosa (strain DSM 24068 / PA7) (Pseudomonas aeruginosa (strain PA7)) protein is Ribosomal RNA small subunit methyltransferase C.